Consider the following 316-residue polypeptide: Phospholipase A1 4 (316 aa).

The N-terminal stretch at 1 to 4 (ADDL) is a signal peptide. The propeptide occupies 5-14 (TTLRNGTLDR). Cys20 and Cys103 are joined by a disulfide. Ser153 functions as the Nucleophile in the catalytic mechanism. Asp181 serves as the catalytic Charge relay system. 2 disulfides stabilise this stretch: Cys192-Cys197 and Cys235-Cys240. Catalysis depends on His242, which acts as the Charge relay system. 3 disulfides stabilise this stretch: Cys257–Cys284, Cys258–Cys309, and Cys277–Cys282.

This sequence belongs to the AB hydrolase superfamily. Lipase family. As to expression, expressed by the venom gland.

The protein resides in the secreted. The enzyme catalyses a 1,2-diacyl-sn-glycero-3-phosphocholine + H2O = a 2-acyl-sn-glycero-3-phosphocholine + a fatty acid + H(+). Functionally, catalyzes the hydrolysis of phosphatidylcholine with phospholipase A1 activity. May act as an allergen and induce hemolytic activity. In Polistes dominula (European paper wasp), this protein is Phospholipase A1 4.